An 80-amino-acid polypeptide reads, in one-letter code: Metallothionein-like protein 2B (80 aa).

The protein belongs to the metallothionein superfamily. Type 15 family. As to expression, highly expressed in stems. Expressed in leaves and rachis.

In terms of biological role, metallothioneins have a high content of cysteine residues that bind various heavy metals. The sequence is that of Metallothionein-like protein 2B (MT2B) from Oryza sativa subsp. japonica (Rice).